The chain runs to 294 residues: ATP phosphoribosyltransferase (294 aa).

The protein belongs to the ATP phosphoribosyltransferase family. Long subfamily. Mg(2+) serves as cofactor.

It localises to the cytoplasm. It carries out the reaction 1-(5-phospho-beta-D-ribosyl)-ATP + diphosphate = 5-phospho-alpha-D-ribose 1-diphosphate + ATP. Its pathway is amino-acid biosynthesis; L-histidine biosynthesis; L-histidine from 5-phospho-alpha-D-ribose 1-diphosphate: step 1/9. With respect to regulation, feedback inhibited by histidine. Functionally, catalyzes the condensation of ATP and 5-phosphoribose 1-diphosphate to form N'-(5'-phosphoribosyl)-ATP (PR-ATP). Has a crucial role in the pathway because the rate of histidine biosynthesis seems to be controlled primarily by regulation of HisG enzymatic activity. The protein is ATP phosphoribosyltransferase of Chlorobium phaeobacteroides (strain DSM 266 / SMG 266 / 2430).